The primary structure comprises 152 residues: Superoxide dismutase [Cu-Zn] (152 aa).

The Cu cation site is built by His-45, His-47, and His-62. A disulfide bridge links Cys-56 with Cys-145. Zn(2+) is bound by residues His-62, His-70, His-79, and Asp-82. His-119 is a binding site for Cu cation.

It belongs to the Cu-Zn superoxide dismutase family. As to quaternary structure, homodimer. The cofactor is Cu cation. Zn(2+) serves as cofactor.

Its subcellular location is the cytoplasm. It carries out the reaction 2 superoxide + 2 H(+) = H2O2 + O2. Functionally, destroys radicals which are normally produced within the cells and which are toxic to biological systems. The protein is Superoxide dismutase [Cu-Zn] (SODCC) of Ipomoea batatas (Sweet potato).